Reading from the N-terminus, the 255-residue chain is MTLTIKEVKQLINAVNTIEELENHECFLDERKGVQNAIARRRKALEKEQALKEKYVEMTYFENEILKEHPNAIICGIDEVGRGPLAGPVVACATILNSNHNYLGLDDSKKVPVTKRLELNEALKNEVTAFAYGIATAEEIDEFNIYKATQIAMQRAIDGLSVQPTHLLIDAMTLDNALPQVSLIKGDARSVSIAAASIMAKVFRDDYMTQLSKDYPEYGFEKNAGYGTKQHLLAIDDIGIMKEHRKSFEPIKSLL.

One can recognise an RNase H type-2 domain in the interval 72–255; the sequence is AIICGIDEVG…KSFEPIKSLL (184 aa). Residues Asp78, Glu79, and Asp170 each coordinate a divalent metal cation.

The protein belongs to the RNase HII family. Requires Mn(2+) as cofactor. Mg(2+) serves as cofactor.

Its subcellular location is the cytoplasm. The enzyme catalyses Endonucleolytic cleavage to 5'-phosphomonoester.. In terms of biological role, endonuclease that specifically degrades the RNA of RNA-DNA hybrids. This chain is Ribonuclease HII, found in Staphylococcus aureus (strain MSSA476).